The sequence spans 205 residues: LexA repressor (205 aa).

A DNA-binding region (H-T-H motif) is located at residues 28-48; that stretch reads VREIGEAVGLASSSTVHGHLA. Catalysis depends on for autocatalytic cleavage activity residues serine 127 and lysine 165.

Belongs to the peptidase S24 family. As to quaternary structure, homodimer. Following treatment with mitomycin C protein levels begin to decrease after a 5-min lag and do not return to their original levels for at least 90 minutes.

It catalyses the reaction Hydrolysis of Ala-|-Gly bond in repressor LexA.. In terms of biological role, represses dinA, dinB, dinC, recA genes and itself by binding to the 14 bp palindromic sequence 5'-CGAACNNNNGTTCG-3'; some genes have a tandem consensus sequence and their binding is cooperative. In the presence of single-stranded DNA, RecA interacts with LexA causing an autocatalytic cleavage which disrupts the DNA-binding part of LexA, leading to derepression of the SOS regulon and eventually DNA repair; autocleavage is maximal at pH 11 in the absence of RecA and ssDNA. The chain is LexA repressor from Bacillus subtilis (strain 168).